Reading from the N-terminus, the 99-residue chain is Protein Frey (99 aa).

The chain crosses the membrane as a helical span at residues 7-29 (GALYPRAGLSLFLLYLVLAAVLL). A disordered region spans residues 65-88 (PKHPWPRGPRPLLSRAQQRKRDGP).

As to quaternary structure, interacts with SPPL2C (via active sites); the interaction stabilizes FREY1 protein and inhibits SPPL2C proteolytic activity. Interacts with IZUMO1; the interaction retains IZUMO1 at the endoplasmic reticulum membrane and coordinates IZUMO1 complex assembly.

It localises to the endoplasmic reticulum membrane. Its function is as follows. Key regulator for male fertility expressed transiently in round spermatids where it recruits IZUMO1 at the endoplasmic reticulum (ER) membrane and coordinates the oolemmal binding multimeric complex (IZUMO1 complex) assembly. Upon complete assembly of the IZUMO1 complex, its ER retention is released, facilitating IZUMO1 complex export to the acrosome. Through the interaction with SPPL2C, inhibits its intramembrane protease activity directly accessing the catalytic center of an I-CLiP. The chain is Protein Frey from Ailuropoda melanoleuca (Giant panda).